Reading from the N-terminus, the 437-residue chain is Trigger factor (437 aa).

The PPIase FKBP-type domain occupies 163-248; that stretch reads GDRVIIDFEG…LNNVSEPTLP (86 aa).

This sequence belongs to the FKBP-type PPIase family. Tig subfamily.

The protein localises to the cytoplasm. The enzyme catalyses [protein]-peptidylproline (omega=180) = [protein]-peptidylproline (omega=0). Functionally, involved in protein export. Acts as a chaperone by maintaining the newly synthesized protein in an open conformation. Functions as a peptidyl-prolyl cis-trans isomerase. In Neisseria gonorrhoeae (strain NCCP11945), this protein is Trigger factor.